Consider the following 138-residue polypeptide: Basic phospholipase A2 PLA-N (138 aa).

The N-terminal stretch at 1 to 16 (MRTLWIMAVLLVGVEG) is a signal peptide. Intrachain disulfides connect C42-C131, C44-C60, C59-C111, C65-C138, C66-C104, C73-C97, and C91-C102. Residues Y43, G45, and G47 each coordinate Ca(2+). H63 is a catalytic residue. D64 contacts Ca(2+). Residue D105 is part of the active site.

The protein belongs to the phospholipase A2 family. Group II subfamily. D49 sub-subfamily. Ca(2+) is required as a cofactor. In terms of tissue distribution, expressed by the venom gland.

It is found in the secreted. The enzyme catalyses a 1,2-diacyl-sn-glycero-3-phosphocholine + H2O = a 1-acyl-sn-glycero-3-phosphocholine + a fatty acid + H(+). Snake venom phospholipase A2 (PLA2) that displays edema-inducing activities, as well as presynaptic neurotoxicity and myotoxicity. PLA2 catalyzes the calcium-dependent hydrolysis of the 2-acyl groups in 3-sn-phosphoglycerides. The protein is Basic phospholipase A2 PLA-N of Protobothrops flavoviridis (Habu).